The primary structure comprises 111 residues: Wound-induced proteinase inhibitor 1 (111 aa).

An N-terminal signal peptide occupies residues Met1–Ala23. A propeptide spanning residues Arg24 to Leu36 is cleaved from the precursor.

This sequence belongs to the protease inhibitor I13 (potato type I serine protease inhibitor) family.

The protein localises to the secreted. This chain is Wound-induced proteinase inhibitor 1 (PIIF), found in Solanum lycopersicum (Tomato).